A 452-amino-acid polypeptide reads, in one-letter code: Eukaryotic translation initiation factor 4B3 (452 aa).

The residue at position 2 (alanine 2) is an N-acetylalanine. Residues 20 to 282 (EEHEAELKQQ…PSGGSRPRLV (263 aa)) are disordered. Positions 28–37 (QQPSPTNQKS) are enriched in polar residues. A compositionally biased stretch (basic and acidic residues) spans 98–110 (PRERSAEELDRSK). Over residues 111–122 (LGGGFRSYGGGR) the composition is skewed to gly residues. Low complexity predominate over residues 126-136 (ESSSSRWGSSR). Residues 137–156 (VSEDGERRGGGFNRDREPSR) show a composition bias toward basic and acidic residues. 2 short sequence motifs (nuclear localization signal) span residues 172–179 (AKKPISGN) and 215–222 (PRRFVSSN). Residues 227–243 (DRFEKRGSFESLSRNRD) show a composition bias toward basic and acidic residues. A phosphoserine mark is found at serine 234, serine 270, and serine 300. The span at 265-280 (GAANGSPPPSGGSRPR) shows a compositional bias: low complexity. A disordered region spans residues 349-452 (AAMEKPNEKS…AKKEETEDKI (104 aa)). The segment covering 369 to 386 (GRKDEERIERSWRKSTEH) has biased composition (basic and acidic residues). Over residues 387 to 397 (SEEDAQEEEPA) the composition is skewed to acidic residues. Composition is skewed to basic and acidic residues over residues 400 to 419 (GAKKEETEDKPAVEEAKKEE) and 441 to 452 (EEAKKEETEDKI).

This sequence belongs to the eIF-4 subunit B family. In terms of assembly, homodimer. Nonspherical monomer. mRNA-discriminating component of initiation complexes. Interacts with MAD2. Post-translationally, phosphorylated.

The protein resides in the nucleus. In terms of biological role, promotes the eIF4F and eIF4A RNA-dependent ATP-hydrolysis activity with different efficiency depending on mRNAs, thus providing mRNA discrimination during initiation of translation. This is Eukaryotic translation initiation factor 4B3 from Arabidopsis thaliana (Mouse-ear cress).